The sequence spans 719 residues: Probable phosphatidylinositol phosphate kinase DDB_G0267588 (719 aa).

The tract at residues 47–261 (VFSPIPPPPS…SDSPNRVRLN (215 aa)) is disordered. Low complexity-rich tracts occupy residues 57–77 (TTDN…TDNT) and 87–104 (IENN…PNSI). Positions 107-129 (ANKKDSIELEEDKEHSIKRKDGS) are enriched in basic and acidic residues. The span at 172-184 (FDATNDNHNPQEV) shows a compositional bias: polar residues. A compositionally biased stretch (low complexity) spans 199-217 (TTTTTTTTTTTTSTNSTSN). 2 stretches are compositionally biased toward polar residues: residues 218–228 (KLPNNGDNTVS) and 248–261 (ASGS…VRLN). Residue Thr-262 is modified to Phosphothreonine. One can recognise a PIPK domain in the interval 316–718 (NAVGKSMGTE…RFQEFLSTII (403 aa)). Positions 579-638 (RENEPPSPSLLRSTLEDSSDFESPSMEQSSAGQQQQQRGSGNYDNSGAGRDSTTGGAAPK) are disordered. A compositionally biased stretch (low complexity) spans 606 to 619 (QSSAGQQQQQRGSG).

Post-translationally, phosphorylated at Thr-262 by pkgB.

In terms of biological role, may be involved in signaling events that underlie chemotaxis via the chemoattractant-mediated pkgB phosphorylation. This Dictyostelium discoideum (Social amoeba) protein is Probable phosphatidylinositol phosphate kinase DDB_G0267588.